We begin with the raw amino-acid sequence, 149 residues long: Calmodulin (149 aa).

Ala2 carries the N-acetylalanine modification. EF-hand domains follow at residues 8-43, 44-79, 81-116, and 117-149; these read EQIA…LGQN, PTEA…KMKD, DSEE…LGEK, and LTDE…MMAK. Residues Asp21, Asp23, Asp25, Cys27, Glu32, Asp57, Asp59, Asn61, Thr63, Glu68, Asp94, Asp96, Asn98, and Glu105 each coordinate Ca(2+). Lys116 bears the N6,N6,N6-trimethyllysine mark. Ca(2+) contacts are provided by Asp130, Asp132, Asp134, Gln136, and Glu141.

It belongs to the calmodulin family. In terms of processing, the N-terminus is blocked.

In terms of biological role, calmodulin mediates the control of a large number of enzymes, ion channels and other proteins by Ca(2+). Among the enzymes to be stimulated by the calmodulin-Ca(2+) complex are a number of protein kinases and phosphatases. This Spinacia oleracea (Spinach) protein is Calmodulin.